The chain runs to 681 residues: Methionine--tRNA ligase (681 aa).

The short motif at 27-37 (DYANGTPHIGH) is the 'HIGH' region element. Positions 316-320 (KMGKS) match the 'KMSKS' region motif. Residue Lys-319 participates in ATP binding. A disordered region spans residues 522–571 (FPKPEPKADETKNAEAKPPKPQAKKEKKTVTDTAPAKTTEQKPEAAAPAQ). Over residues 525–539 (PEPKADETKNAEAKP) the composition is skewed to basic and acidic residues. In terms of domain architecture, tRNA-binding spans 580 to 681 (DFAKIDLRIA…LDLPSGTKVR (102 aa)).

This sequence belongs to the class-I aminoacyl-tRNA synthetase family. MetG type 2B subfamily. As to quaternary structure, homodimer.

Its subcellular location is the cytoplasm. The enzyme catalyses tRNA(Met) + L-methionine + ATP = L-methionyl-tRNA(Met) + AMP + diphosphate. Is required not only for elongation of protein synthesis but also for the initiation of all mRNA translation through initiator tRNA(fMet) aminoacylation. The protein is Methionine--tRNA ligase (metG) of Deinococcus radiodurans (strain ATCC 13939 / DSM 20539 / JCM 16871 / CCUG 27074 / LMG 4051 / NBRC 15346 / NCIMB 9279 / VKM B-1422 / R1).